A 361-amino-acid chain; its full sequence is Queuine tRNA-ribosyltransferase (361 aa).

D92 acts as the Proton acceptor in catalysis. Substrate is bound by residues 92–96, D146, Q189, and G216; that span reads DSGGF. The tract at residues 247 to 253 is RNA binding; it reads GVGKPAD. Catalysis depends on D266, which acts as the Nucleophile. The tract at residues 271–275 is RNA binding; important for wobble base 34 recognition; it reads TRSGR. The Zn(2+) site is built by C304, C306, C309, and H335.

The protein belongs to the queuine tRNA-ribosyltransferase family. Homodimer. Within each dimer, one monomer is responsible for RNA recognition and catalysis, while the other monomer binds to the replacement base PreQ1. Zn(2+) is required as a cofactor.

It catalyses the reaction 7-aminomethyl-7-carbaguanine + guanosine(34) in tRNA = 7-aminomethyl-7-carbaguanosine(34) in tRNA + guanine. It participates in tRNA modification; tRNA-queuosine biosynthesis. In terms of biological role, catalyzes the base-exchange of a guanine (G) residue with the queuine precursor 7-aminomethyl-7-deazaguanine (PreQ1) at position 34 (anticodon wobble position) in tRNAs with GU(N) anticodons (tRNA-Asp, -Asn, -His and -Tyr). Catalysis occurs through a double-displacement mechanism. The nucleophile active site attacks the C1' of nucleotide 34 to detach the guanine base from the RNA, forming a covalent enzyme-RNA intermediate. The proton acceptor active site deprotonates the incoming PreQ1, allowing a nucleophilic attack on the C1' of the ribose to form the product. After dissociation, two additional enzymatic reactions on the tRNA convert PreQ1 to queuine (Q), resulting in the hypermodified nucleoside queuosine (7-(((4,5-cis-dihydroxy-2-cyclopenten-1-yl)amino)methyl)-7-deazaguanosine). The sequence is that of Queuine tRNA-ribosyltransferase from Rickettsia peacockii (strain Rustic).